The chain runs to 253 residues: Sugar fermentation stimulation protein homolog (253 aa).

This sequence belongs to the SfsA family.

This chain is Sugar fermentation stimulation protein homolog, found in Prochlorococcus marinus (strain NATL1A).